The following is a 97-amino-acid chain: MSRLFVKRLPTGSFLMLLLYIGLLLSAIAVAYSTYWNRQLLNSLYSELSVRDKAQAEWGRLILEQSTWTAHSRIESLAVEQLRMRVPDPAEVRMVAP.

The Cytoplasmic segment spans residues 1-11; sequence MSRLFVKRLPT. Residues 12–32 form a helical membrane-spanning segment; the sequence is GSFLMLLLYIGLLLSAIAVAY. Over 33–97 the chain is Periplasmic; sequence STYWNRQLLN…DPAEVRMVAP (65 aa).

Belongs to the FtsL family. As to quaternary structure, part of a complex composed of FtsB, FtsL and FtsQ.

Its subcellular location is the cell inner membrane. Its function is as follows. Essential cell division protein. May link together the upstream cell division proteins, which are predominantly cytoplasmic, with the downstream cell division proteins, which are predominantly periplasmic. This chain is Cell division protein FtsL, found in Pseudomonas aeruginosa (strain ATCC 15692 / DSM 22644 / CIP 104116 / JCM 14847 / LMG 12228 / 1C / PRS 101 / PAO1).